The sequence spans 143 residues: MSVIPPKFFKIANISIGCIDIIAALSQLTYIFTNLNVFLLAVYGLALSVPIVYLEFKVPSNLYRYASFYFSFLGRGLSYILLSLIISFGGIYNILAGMFTFILGVAFIVFHFSQFVEEPANFRAPGSSLSIGDDDIDDDDDMI.

Over 1–10 (MSVIPPKFFK) the chain is Cytoplasmic. A helical membrane pass occupies residues 11–31 (IANISIGCIDIIAALSQLTYI). Residues 32 to 35 (FTNL) lie on the Lumenal side of the membrane. A helical membrane pass occupies residues 36–56 (NVFLLAVYGLALSVPIVYLEF). Residues 57 to 67 (KVPSNLYRYAS) are Cytoplasmic-facing. A helical membrane pass occupies residues 68-88 (FYFSFLGRGLSYILLSLIISF). Residue G89 is a topological domain, lumenal. Residues 90-110 (GIYNILAGMFTFILGVAFIVF) form a helical membrane-spanning segment. Topologically, residues 111-143 (HFSQFVEEPANFRAPGSSLSIGDDDIDDDDDMI) are cytoplasmic.

Belongs to the TVP15 family. In terms of assembly, interacts with TVP18.

It localises to the golgi apparatus membrane. In terms of biological role, golgi membrane protein involved in vesicular trafficking. The protein is Golgi apparatus membrane protein TVP15 (TVP15) of Saccharomyces cerevisiae (strain ATCC 204508 / S288c) (Baker's yeast).